The sequence spans 704 residues: MNSSSIQRKILVTSALPYANGPIHLGHVLEGIQTDIWVRFQKAIGNECYFFCADDTHGTPVMLAARKEKITPEQLIERVGQEHYTDLTSFGINYDNYDSTHSKANQEISKDIYLKLKEKGHISKRSIEQAYCEKDRMFLPDRFIKGTCPNCNSKNQYGDNCEVCGATYNPKDLIDSHCTLCGTPPVVKNSDHIFFKLGNFHKKTEQSNVDFDLQSWIETSEAVSESEGVKKKLKEWFDAGLQDWDISRDGPYFGFEIPSEKNKYFYVWLDAPVGYMASSKNFFEKNFPNEPNKFDSFWKDKNSEIVHFIGKDILYFHTLFWPAMLEGSGYRSPSKIHVHGFIGVNGEKMSKSRGTFIKAKTFAKFLDAEHLRFYLAAKLGPGMDDIDLSFDDFVNKVNADLVGNLINSVSRVSTTILDTLDRTLGTVSEEGLALLEEILTQPVKTGTRDDSIQNIIKTAYEQRNYAKVMREITRLGDRVNRYVNDNAPWKLIKENPEKAREIVTAVLNASRFLAIYLYPVVPKISEQIYKLLNLKGSPEFKDLDKSRILEKTKINPYEMITKRVDEKAIKVMLEENKQSEHPKKEEIPKSSNKEEGIEISIEELSKVELRVGEIVEAKPVEGADKLVNVKVDLGELGIKNVFAGIKIAYQPENLKGLKVVVVANLKPRKMKFGISEAMLLASGEGESLSLFVPHKDAKPGDRLK.

The 'HIGH' region motif lies at 17-27; the sequence is PYANGPIHLGH. Zn(2+)-binding residues include Cys-148, Cys-151, Cys-161, and Cys-164. The 'KMSKS' region motif lies at 348–352; sequence KMSKS. Position 351 (Lys-351) interacts with ATP. Residues 603–704 enclose the tRNA-binding domain; that stretch reads ELSKVELRVG…KDAKPGDRLK (102 aa).

Belongs to the class-I aminoacyl-tRNA synthetase family. MetG type 1 subfamily. Homodimer. Zn(2+) serves as cofactor.

It localises to the cytoplasm. It carries out the reaction tRNA(Met) + L-methionine + ATP = L-methionyl-tRNA(Met) + AMP + diphosphate. Is required not only for elongation of protein synthesis but also for the initiation of all mRNA translation through initiator tRNA(fMet) aminoacylation. The polypeptide is Methionine--tRNA ligase (Leptospira borgpetersenii serovar Hardjo-bovis (strain L550)).